The chain runs to 127 residues: Calcium-binding protein PBP1 (127 aa).

Residues Met-1–Gln-18 show a composition bias toward polar residues. Residues Met-1–Gln-20 form a disordered region. The 36-residue stretch at Leu-72 to Glu-107 folds into the EF-hand domain. Ca(2+)-binding residues include Asp-85, Asp-87, Asp-89, and Glu-96.

Interacts with PID.

Functionally, potential calcium sensor that binds calcium in vitro. In Arabidopsis thaliana (Mouse-ear cress), this protein is Calcium-binding protein PBP1 (PBP1).